We begin with the raw amino-acid sequence, 341 residues long: Dye-decolorizing peroxidase (341 aa).

The Proton acceptor role is filled by aspartate 148. Histidine 221 is a binding site for heme. Positions 304-341 are targeting peptide; that stretch reads FLDDPPDAPTRLVPEATFTAPISDGSLGIGSLKRSAQQ.

Belongs to the DyP-type peroxidase family. In terms of assembly, homohexamer. Heme b is required as a cofactor.

It is found in the encapsulin nanocompartment. In terms of biological role, cargo protein of a type 1 encapsulin nanocompartment. Has both general peroxidase activity and dye-decolorizing activity. Can catalyze the oxidation of both protoporphyrinogen IX and coproporphyrinogen III to their corresponding porphyrins. Also efficiently decolorizes the dyes alizarin red and Cibacron blue F3GA. This cargo-loaded encapsulin nanocompartment is probably involved in protection against oxidative damage. The sequence is that of Dye-decolorizing peroxidase from Rhodococcus erythropolis (strain PR4 / NBRC 100887).